We begin with the raw amino-acid sequence, 396 residues long: Tyrosine--tRNA ligase (396 aa).

The 'HIGH' region signature appears at Pro43–His52. The short motif at Lys227 to Ser231 is the 'KMSKS' region element. ATP is bound at residue Lys230. One can recognise an S4 RNA-binding domain in the interval Ile338–Val396.

Belongs to the class-I aminoacyl-tRNA synthetase family. TyrS type 2 subfamily. Homodimer.

It is found in the cytoplasm. It carries out the reaction tRNA(Tyr) + L-tyrosine + ATP = L-tyrosyl-tRNA(Tyr) + AMP + diphosphate + H(+). Catalyzes the attachment of tyrosine to tRNA(Tyr) in a two-step reaction: tyrosine is first activated by ATP to form Tyr-AMP and then transferred to the acceptor end of tRNA(Tyr). The protein is Tyrosine--tRNA ligase of Dehalococcoides mccartyi (strain ATCC BAA-2266 / KCTC 15142 / 195) (Dehalococcoides ethenogenes (strain 195)).